The chain runs to 236 residues: Truncated formate dehydrogenase 2 (236 aa).

NAD(+) is bound by residues Arg36–Ile37, Asp57, Pro104–Asp108, Thr130, Asp156, and His185–Gly188.

It belongs to the D-isomer specific 2-hydroxyacid dehydrogenase family. FDH subfamily.

The sequence is that of Truncated formate dehydrogenase 2 from Saccharomyces cerevisiae (strain ATCC 204508 / S288c) (Baker's yeast).